Reading from the N-terminus, the 152-residue chain is Large ribosomal subunit protein uL13 (152 aa).

It belongs to the universal ribosomal protein uL13 family. In terms of assembly, part of the 50S ribosomal subunit.

Its function is as follows. This protein is one of the early assembly proteins of the 50S ribosomal subunit, although it is not seen to bind rRNA by itself. It is important during the early stages of 50S assembly. The chain is Large ribosomal subunit protein uL13 from Neorickettsia sennetsu (strain ATCC VR-367 / Miyayama) (Ehrlichia sennetsu).